A 54-amino-acid polypeptide reads, in one-letter code: Hemolytic toxin (54 aa).

The tract at residues 3 to 12 (ALAGTIIAGA) is plays an important role in the hemolytic activity. Residues 11–30 (GASLGFQILDKVLGELGKVS) are N-terminal region.

This sequence belongs to the actinoporin family. Sea anemone subfamily. Octamer or nonamer in membranes. Monomer in the soluble state.

It is found in the secreted. Its subcellular location is the nematocyst. The protein resides in the target cell membrane. In terms of biological role, pore-forming protein that forms cations-selective hydrophilic pores of around 1 nm and causes cytolysis. Pore formation is a multi-step process that involves specific recognition of membrane sphingomyelin (but neither cholesterol nor phosphatidylcholine) using aromatic rich region and adjacent phosphocholine (POC) binding site, firm binding to the membrane (mainly driven by hydrophobic interactions) accompanied by the transfer of the N-terminal region to the lipid-water interface and finally pore formation after oligomerization of monomers. The polypeptide is Hemolytic toxin (Heteractis magnifica (Magnificent sea anemone)).